Here is a 362-residue protein sequence, read N- to C-terminus: RING finger protein 32 (362 aa).

The RING-type 1; atypical zinc finger occupies 127–169 (CPICKEEFELRPQVLLSCSHVFHKACLQAFEKFTNKKTCPLCR). The IQ domain occupies 186–215 (RIKCVTRIQAYWRGCVVRKWYRNLRKTVPP). The RING-type 2; atypical zinc-finger motif lies at 293-352 (CSICLAPLSAAGGQRVGAGRRSREMALLSCSHVFHHACLLALEEFSVGDRPPFHACPLCR).

Highly expressed in testis, less abundant in ovary.

It localises to the cytoplasm. Functionally, may play a role in sperm formation. The sequence is that of RING finger protein 32 (RNF32) from Homo sapiens (Human).